The sequence spans 456 residues: MSSMDCATFPMHPKMDEQLARTFVINEEEEEKHIQKVQNAFLYYGPYACQRLKRSMDYLNSLSGEDQIMLAKYRGHLECVRTCIDRNQAVIREILRGRVLYPTDEATGDPSEFDEPPPNVRHGDMDQIDIPFDEADVEPLKILKAQSTLKLIARDWSTEGALEREQSYKPIIDSIVAYFKHSDFELKDIKILVPGAGLGRLTYELACLGYSCEGNEFSYFMLIASNFVLNLCDNENKYVLYPWVHQYVNNLRREDQVAPVRFPDVCPLKNPPKGHFEIAAGDFLEVYKTPNAYNCVATCFFIDCANNVIDFIRTIYKILVPGGIWVNLGPLLYHFSDVSGQNSIEPAFEDLCIIMESVGFVIEKSRTGIRTKYAQNPSSMKQSEYQSLFWVCRKPDLFEEQRGKRKASREPHDLIVREDSEEEGEQQPERNETEEKQQLKPLATANCETEIKEQPS.

S-adenosyl-L-methionine-binding residues include arginine 154, glycine 195, glutamate 216, aspartate 282, phenylalanine 283, and cysteine 299. Aspartate 303, histidine 334, and tyrosine 385 together coordinate carnosine. Positions 402 to 418 (RGKRKASREPHDLIVRE) are enriched in basic and acidic residues. The segment at 402–456 (RGKRKASREPHDLIVREDSEEEGEQQPERNETEEKQQLKPLATANCETEIKEQPS) is disordered. Serine 408 and serine 420 each carry phosphoserine. Over residues 427 to 438 (QPERNETEEKQQ) the composition is skewed to basic and acidic residues.

The protein belongs to the carnosine N-methyltransferase family. Associates with the GATOR2 complex; the interaction is probably direct and is inhibited by S-adenosyl-L-methionine binding. Associates with the GATOR1 complex; the interaction is probably indirect and mediated by the GATOR2 complex.

It catalyses the reaction carnosine + S-adenosyl-L-methionine = anserine + S-adenosyl-L-homocysteine + H(+). In terms of biological role, S-adenosyl-L-methionine-binding protein that acts as a sensor to signal methionine availability to the mTORC1 signaling pathway. Associates with the GATOR2 complex in the absence of methionine to inhibit mTORC1 signaling, but dissociates in the presence of the methionine derivative S-adenosyl-L-methionine; S-adenosyl-L-homocysteine binding does not induce dissociation. Required for mTORC1 pathway response to methionine starvation. Exerts a protective function on developing egg chambers by inhibiting mTORC1 signaling under starvation conditions. May also function as a N-methyltransferase that mediates the formation of anserine (beta-alanyl-N(Pi)-methyl-L-histidine) from carnosine. It is unclear whether this protein has retained N-methyltransferase activity or if it is an evolutionary intermediate whose substrate binding ability has been co-opted to function as a nutrient sensor for mTORC1 signaling. The sequence is that of Carnosine N-methyltransferase unmet from Drosophila melanogaster (Fruit fly).